Reading from the N-terminus, the 533-residue chain is MQRRHFLKNAAAALAALGLPALPPWALAAKAVGLRRLGQPQPFDYAWLKGQARALAKAPYKSHKQVLPGPLESLNWDQYQSIRYRQDHALWADGNGKFQAKFFHLGLYFHTPVHIYDIVDGKAQQLAYDPAAFDYGRSGLGGKQLPKDLGFAGFRLNTRKDTDRDFSAFLGASYFRAVGKEGQYGQSARGLAIDTGTGGPEEFPDFIAYYLEQPADDSDTVVVYGLLDSPSVSGAYRFAITNGEVLVMDIDSALYPRKAIERLGIGPCTSMYQTGENDRRMDWDWRPEIHDTDGLAMWTGGGEWIWRPLCNPPHLRFNMFVDENPRGFGLLQRDRNFDHYQDDGVFYEKRPCLWVEPKSGWGKGSVQLVEIPTVDETFDNIVAFWNPQAKPQPGQELLMGYRLYWGAHPPASSPLAHCMATRTGLGGIVGQKRSHFSWRFAVDFAGGELAALAKDPKAKVEAVLQVSRGTTEIVSARPLHELKGYRAMFDLVPPDEGTQQIDIRLFLRANGKPLTETWLYQWTPPPASERKIY.

A signal peptide (tat-type signal) is located at residues 1 to 28 (MQRRHFLKNAAAALAALGLPALPPWALA).

It belongs to the OpgD/OpgG family. Post-translationally, predicted to be exported by the Tat system. The position of the signal peptide cleavage has not been experimentally proven.

The protein resides in the periplasm. It functions in the pathway glycan metabolism; osmoregulated periplasmic glucan (OPG) biosynthesis. Functionally, probably involved in the control of the structural glucose backbone of osmoregulated periplasmic glucans (OPGs). The chain is Glucans biosynthesis protein D from Xanthomonas campestris pv. campestris (strain 8004).